A 637-amino-acid chain; its full sequence is MTNQDSDQAWGKLVKVDASPGSEIVLINSECTVGRKKDCDLSFPANKLVSGNHCKITHDQNSGKVWLEDMSTNGTVINMSKVVKKQTHLLQNGDVIYFVYRKNEPEQNIAYVYQSITPQESASHDVEDAGREEDSDLTETESEPAPVEPVIVKPLPQSGHEDPQPSTSSSSLHFYNMPLSTCSDVSARKNPVSSSAVCKGDSTSSGSPAQTRLKWTCWTDGEPEEEMQRKRRKTDRDDPGFGSAHSDASADIPLRGASGKEKTEGATTDKMEESLTCIICQDLLYDCISVQPCMHTFCAACYSGWMERSSFCPTCRCPVERIRKNHILNNLVEAYLLQHPEKCRTEDDLRSMDARNKITQDMLQPKVERSFSDEEASSDYLFELSDNDSDISDMSQPYMMCRQCPGYRKELSSALWICESAQSESLAKTAGDGPSTSSDSTTAAPQEFRCPPQASHLICTCCLQPMPDRRFEHLPPQVSPQHCLVCQKPFCHVYWGCPRIGCHGCLARFSELNLNDKCLDGVFNGNQYESEVLQNYLSCRGMSWRHLLQDSLQALQQGLYHLSDYRITANSFLCYCCGLRTFRELAYKYRERIPPSELPDAVTNRPNCYWGRNCRTQVKAHHALKFNHICEQTRFKN.

In terms of domain architecture, FHA spans 31–82 (CTVGRKKDCDLSFPANKLVSGNHCKITHDQNSGKVWLEDMSTNGTVINMSKV). 2 disordered regions span residues 120–172 (ESAS…SSSL) and 193–267 (SSSA…EGAT). Residues 130–142 (GREEDSDLTETES) show a composition bias toward acidic residues. Residues 193-210 (SSSAVCKGDSTSSGSPAQ) show a composition bias toward polar residues. Residues 258–267 (SGKEKTEGAT) are compositionally biased toward basic and acidic residues. Residues 277-316 (CIICQDLLYDCISVQPCMHTFCAACYSGWMERSSFCPTCR) form an RING-type zinc finger. The interval 428–447 (KTAGDGPSTSSDSTTAAPQE) is disordered. Residues 429-445 (TAGDGPSTSSDSTTAAP) show a composition bias toward low complexity. A PBZ-type zinc finger spans residues 606 to 628 (PNCYWGRNCRTQVKAHHALKFNH).

This sequence belongs to the CHFR family.

Its subcellular location is the nucleus. The protein localises to the PML body. It carries out the reaction S-ubiquitinyl-[E2 ubiquitin-conjugating enzyme]-L-cysteine + [acceptor protein]-L-lysine = [E2 ubiquitin-conjugating enzyme]-L-cysteine + N(6)-ubiquitinyl-[acceptor protein]-L-lysine.. It functions in the pathway protein modification; protein ubiquitination. Its function is as follows. E3 ubiquitin-protein ligase that functions in the antephase checkpoint by actively delaying passage into mitosis in response to microtubule poisons. Acts in early prophase before chromosome condensation, when the centrosome move apart from each other along the periphery of the nucleus. Probably involved in signaling the presence of mitotic stress caused by microtubule poisons by mediating the 'Lys-48'-linked ubiquitination of target proteins, leading to their degradation by the proteasome. May also promote the formation of 'Lys-63'-linked polyubiquitin chains and functions with the specific ubiquitin-conjugating ubc13-mms2 (ube2n-ube2v2) heterodimer. Substrates that are polyubiquitinated at 'Lys-63' are usually not targeted for degradation, but are rather involved in signaling cellular stress. This chain is E3 ubiquitin-protein ligase CHFR (chfr), found in Danio rerio (Zebrafish).